The sequence spans 337 residues: Protoheme IX farnesyltransferase (337 aa).

Residues 1–17 show a composition bias toward polar residues; the sequence is MPFSISKDTVSNQTTHV. The tract at residues 1–41 is disordered; that stretch reads MPFSISKDTVSNQTTHVATAPASQRPDPVETKVEQEQGRPR. Over residues 27-41 the composition is skewed to basic and acidic residues; sequence DPVETKVEQEQGRPR. A run of 8 helical transmembrane segments spans residues 59–79, 81–101, 130–150, 153–173, 196–216, 250–270, 271–291, and 311–331; these read IIEL…HGVP, LGLV…ANVF, SALI…GFGA, LSAA…SMLL, WTAV…IVFW, VAIQ…VLWP, VAHM…VFIV, and PMGL…AIAV.

The protein belongs to the UbiA prenyltransferase family. Protoheme IX farnesyltransferase subfamily.

It localises to the cell membrane. It carries out the reaction heme b + (2E,6E)-farnesyl diphosphate + H2O = Fe(II)-heme o + diphosphate. It functions in the pathway porphyrin-containing compound metabolism; heme O biosynthesis; heme O from protoheme: step 1/1. Converts heme B (protoheme IX) to heme O by substitution of the vinyl group on carbon 2 of heme B porphyrin ring with a hydroxyethyl farnesyl side group. The protein is Protoheme IX farnesyltransferase of Cutibacterium acnes (strain DSM 16379 / KPA171202) (Propionibacterium acnes).